Consider the following 210-residue polypeptide: Protein-L-isoaspartate O-methyltransferase (210 aa).

The active site involves S52.

Belongs to the methyltransferase superfamily. L-isoaspartyl/D-aspartyl protein methyltransferase family.

Its subcellular location is the cytoplasm. The catalysed reaction is [protein]-L-isoaspartate + S-adenosyl-L-methionine = [protein]-L-isoaspartate alpha-methyl ester + S-adenosyl-L-homocysteine. Its function is as follows. Catalyzes the methyl esterification of L-isoaspartyl residues in peptides and proteins that result from spontaneous decomposition of normal L-aspartyl and L-asparaginyl residues. It plays a role in the repair and/or degradation of damaged proteins. The chain is Protein-L-isoaspartate O-methyltransferase from Protochlamydia amoebophila (strain UWE25).